The following is a 486-amino-acid chain: Argininosuccinate lyase (486 aa).

The protein belongs to the lyase 1 family. Argininosuccinate lyase subfamily.

It is found in the cytoplasm. It carries out the reaction 2-(N(omega)-L-arginino)succinate = fumarate + L-arginine. It functions in the pathway amino-acid biosynthesis; L-arginine biosynthesis; L-arginine from L-ornithine and carbamoyl phosphate: step 3/3. This is Argininosuccinate lyase from Acidobacterium capsulatum (strain ATCC 51196 / DSM 11244 / BCRC 80197 / JCM 7670 / NBRC 15755 / NCIMB 13165 / 161).